A 311-amino-acid chain; its full sequence is tRNA dimethylallyltransferase (311 aa).

G14–T21 lines the ATP pocket. T16 to T21 serves as a coordination point for substrate. The tract at residues D39–Q42 is interaction with substrate tRNA.

This sequence belongs to the IPP transferase family. As to quaternary structure, monomer. It depends on Mg(2+) as a cofactor.

The enzyme catalyses adenosine(37) in tRNA + dimethylallyl diphosphate = N(6)-dimethylallyladenosine(37) in tRNA + diphosphate. Catalyzes the transfer of a dimethylallyl group onto the adenine at position 37 in tRNAs that read codons beginning with uridine, leading to the formation of N6-(dimethylallyl)adenosine (i(6)A). The protein is tRNA dimethylallyltransferase of Lactiplantibacillus plantarum (strain ATCC BAA-793 / NCIMB 8826 / WCFS1) (Lactobacillus plantarum).